A 384-amino-acid polypeptide reads, in one-letter code: PqqA peptide cyclase (384 aa).

The 216-residue stretch at 5–220 (VGLPLWLLAE…TNEYREKLKA (216 aa)) folds into the Radical SAM core domain. Residues C19, C23, and C26 each coordinate [4Fe-4S] cluster.

It belongs to the radical SAM superfamily. PqqE family. As to quaternary structure, interacts with PqqD. The interaction is necessary for activity of PqqE. It depends on [4Fe-4S] cluster as a cofactor.

It carries out the reaction [PQQ precursor protein] + S-adenosyl-L-methionine = E-Y cross-linked-[PQQ precursor protein] + 5'-deoxyadenosine + L-methionine + H(+). The protein operates within cofactor biosynthesis; pyrroloquinoline quinone biosynthesis. Catalyzes the cross-linking of a glutamate residue and a tyrosine residue in the PqqA protein as part of the biosynthesis of pyrroloquinoline quinone (PQQ). The polypeptide is PqqA peptide cyclase (Acinetobacter baumannii (strain ACICU)).